Reading from the N-terminus, the 357-residue chain is Meiotic driver wtf9 (357 aa).

A disordered region spans residues 1 to 39 (MKNKYYPLRSSMDEMSAKNDNEIDLEKGPLPEYNSEDGS). The segment covering 11–29 (SMDEMSAKNDNEIDLEKGP) has biased composition (basic and acidic residues). 7 helical membrane-spanning segments follow: residues 89–109 (LLIS…CVNP), 119–139 (AFFV…FCFF), 149–169 (CIKV…ISLA), 198–218 (VVII…RSKF), 232–252 (CSIS…FWTL), 256–276 (FSGL…TKGL), and 286–306 (ATGY…LFFY).

It belongs to the WTF family. In terms of assembly, homomer. Forms protein aggregates. The two isoforms can interact with each other and with themselves. High sequence similarity is required for their interaction.

Its subcellular location is the spore membrane. It is found in the vacuole membrane. It localises to the ascus epiplasm. The protein resides in the cytoplasm. The protein localises to the endoplasmic reticulum membrane. In terms of biological role, promotes unequal transmission of alleles from the parental zygote to progeny spores by acting as poison/antidote system where the poison and antidote proteins are produced from the same locus; the poison component is trans-acting and targets all spores within an ascus whereas the antidote component is spore-specific, leading to poisoning of all progeny that do not inherit the allele. Its function is as follows. Localizes isoform 2 to the vacuole thereby facilitating its degradation. Forms toxic aggregates that disrupt spore maturation. This chain is Meiotic driver wtf9, found in Schizosaccharomyces kambucha (Fission yeast).